We begin with the raw amino-acid sequence, 298 residues long: Octopine catabolism/uptake operon regulatory protein OccR (298 aa).

An HTH lysR-type domain is found at 1–58; sequence MNLRQVEAFRAVMLTGQMTAAAELMLVTQPAISRLIKDFEQATKLQLFERRGNHIIPT. The H-T-H motif DNA-binding region spans 18–37; that stretch reads MTAAAELMLVTQPAISRLIK.

This sequence belongs to the LysR transcriptional regulatory family.

Functionally, positive regulatory protein for the occ operon involved in octopine catabolism and uptake. Also acts as a negative regulator of its expression. The sequence is that of Octopine catabolism/uptake operon regulatory protein OccR (occR) from Agrobacterium tumefaciens (strain Ach5).